A 319-amino-acid polypeptide reads, in one-letter code: Putative antiporter CaxA (319 aa).

The next 10 membrane-spanning stretches (helical) occupy residues 3–23, 38–58, 81–101, 105–125, 127–147, 175–195, 208–228, 250–270, 275–292, and 297–317; these read VATIFVLVGLVLLIWSADRFV, MIIGLTIVAMGSSAPEIMVSA, ILLVIGATALLKPIAVASMTI, FPLLILVTLLGYLFLADQSLT, AEGALFLGGFVLFLVLMVYWG, VWLVLGLALLLASSQLLVHGA, LIGLTIIAIGTSLPELAASLI, ILAVLGVGTIIAPGVIDAAAA, YVMMAATLALLLMSLRLG, and INRVEGCILLMAFIGYQYLLF.

It belongs to the Ca(2+):cation antiporter (CaCA) (TC 2.A.19) family.

The protein resides in the cell membrane. Confers modest Ca(2+) and Na(+) resistance. The chain is Putative antiporter CaxA (caxA) from Alkalimonas amylolytica.